A 251-amino-acid polypeptide reads, in one-letter code: Triosephosphate isomerase (251 aa).

Residue 10–12 (NWK) coordinates substrate. H99 acts as the Electrophile in catalysis. Catalysis depends on E167, which acts as the Proton acceptor. Substrate-binding positions include G173, S211, and 232–233 (GG).

The protein belongs to the triosephosphate isomerase family. In terms of assembly, homodimer.

It localises to the cytoplasm. It carries out the reaction D-glyceraldehyde 3-phosphate = dihydroxyacetone phosphate. It functions in the pathway carbohydrate biosynthesis; gluconeogenesis. It participates in carbohydrate degradation; glycolysis; D-glyceraldehyde 3-phosphate from glycerone phosphate: step 1/1. Functionally, involved in the gluconeogenesis. Catalyzes stereospecifically the conversion of dihydroxyacetone phosphate (DHAP) to D-glyceraldehyde-3-phosphate (G3P). In Neisseria meningitidis serogroup A / serotype 4A (strain DSM 15465 / Z2491), this protein is Triosephosphate isomerase.